Here is a 98-residue protein sequence, read N- to C-terminus: NADH-ubiquinone oxidoreductase chain 4L (98 aa).

3 helical membrane-spanning segments follow: residues 2–22 (PSIS…MLIF), 29–49 (SLLC…LTIL), and 61–81 (ILLL…LVTV).

It belongs to the complex I subunit 4L family. Core subunit of respiratory chain NADH dehydrogenase (Complex I) which is composed of 45 different subunits.

Its subcellular location is the mitochondrion inner membrane. The catalysed reaction is a ubiquinone + NADH + 5 H(+)(in) = a ubiquinol + NAD(+) + 4 H(+)(out). In terms of biological role, core subunit of the mitochondrial membrane respiratory chain NADH dehydrogenase (Complex I) which catalyzes electron transfer from NADH through the respiratory chain, using ubiquinone as an electron acceptor. Part of the enzyme membrane arm which is embedded in the lipid bilayer and involved in proton translocation. The chain is NADH-ubiquinone oxidoreductase chain 4L (MT-ND4L) from Eulemur coronatus (Crowned lemur).